Reading from the N-terminus, the 103-residue chain is Small ribosomal subunit protein uS10 (103 aa).

The protein belongs to the universal ribosomal protein uS10 family. As to quaternary structure, part of the 30S ribosomal subunit.

Its function is as follows. Involved in the binding of tRNA to the ribosomes. The polypeptide is Small ribosomal subunit protein uS10 (Azotobacter vinelandii (strain DJ / ATCC BAA-1303)).